The sequence spans 389 residues: 23S rRNA (uracil(747)-C(5))-methyltransferase RlmC (389 aa).

[4Fe-4S] cluster contacts are provided by cysteine 12, cysteine 20, cysteine 23, and cysteine 99. Residues glutamine 224, phenylalanine 253, glutamate 274, and asparagine 321 each contribute to the S-adenosyl-L-methionine site. Cysteine 348 (nucleophile) is an active-site residue.

It belongs to the class I-like SAM-binding methyltransferase superfamily. RNA M5U methyltransferase family. RlmC subfamily.

It carries out the reaction uridine(747) in 23S rRNA + S-adenosyl-L-methionine = 5-methyluridine(747) in 23S rRNA + S-adenosyl-L-homocysteine + H(+). Catalyzes the formation of 5-methyl-uridine at position 747 (m5U747) in 23S rRNA. This Shewanella sp. (strain W3-18-1) protein is 23S rRNA (uracil(747)-C(5))-methyltransferase RlmC.